The primary structure comprises 570 residues: A-type ATP synthase subunit A (570 aa).

223 to 230 contacts ATP; it reads GPFGSGKT.

The protein belongs to the ATPase alpha/beta chains family. In terms of assembly, has multiple subunits with at least A(3), B(3), C, D, E, F, H, I and proteolipid K(x).

The protein resides in the cell membrane. It catalyses the reaction ATP + H2O + 4 H(+)(in) = ADP + phosphate + 5 H(+)(out). Component of the A-type ATP synthase that produces ATP from ADP in the presence of a proton gradient across the membrane. The A chain is the catalytic subunit. The sequence is that of A-type ATP synthase subunit A from Nanoarchaeum equitans (strain Kin4-M).